We begin with the raw amino-acid sequence, 744 residues long: Leukocyte immunoglobulin-like receptor subfamily B member 3A (744 aa).

The signal sequence occupies residues 1 to 24; sequence MTFTFTALLCLGLTLGLWIPVLTG. Residues 25-543 are Extracellular-facing; it reads SLPKPILRVQ…PPDGLQRYLK (519 aa). Ig-like C2-type domains are found at residues 26-119, 121-221, 223-316, 320-419, and 426-520; these read LPKP…VVTG, YSKP…LVSG, LQKP…VVTG, YHPL…LITG, and FLSV…IVSG. Intrachain disulfides connect Cys49/Cys98, Cys144/Cys197, and Cys246/Cys295. N-linked (GlcNAc...) asparagine glycosylation is present at Asn79. N-linked (GlcNAc...) asparagine glycosylation is present at Asn338. A disulfide bond links Cys343 and Cys395. Asn440 carries N-linked (GlcNAc...) asparagine glycosylation. Cys445 and Cys496 form a disulfide bridge. The helical transmembrane segment at 544-564 threads the bilayer; it reads ALIGVSVAFLLFLFILIFILL. The Cytoplasmic portion of the chain corresponds to 565-744; the sequence is RRRHQEKFRK…PGAVPKNKKQ (180 aa). Over residues 572–584 the composition is skewed to basic and acidic residues; it reads FRKDDEDAQKGKE. Disordered stretches follow at residues 572–617, 630–652, and 667–744; these read FRKD…ESLY, ELDTWKPPEGDPQGETYAQVEPS, and EQLN…NKKQ. The short motif at 615-620 is the ITIM motif 1 element; that stretch reads SLYASV. 2 consecutive short sequence motifs (ITIM motif) follow at residues 695–700 and 725–730; these read VTYAQL and SVYAAL. 2 positions are modified to phosphotyrosine; by LYN: Tyr697 and Tyr727.

In terms of assembly, interacts with LYN, PTPN6/SHP-1 and PTPN11/SHP-2. In terms of processing, phosphorylated on tyrosine residues by LYN. Phosphorylation at Tyr-697 and Tyr-727 is important for interaction with PTPN6/SHP-1 and PTPN11/SHP-2.

It is found in the cell membrane. May act as receptor for class I MHC antigens. Becomes activated upon coligation with immune receptors, such as FCGR2B and the B-cell receptor. Down-regulates antigen-induced B-cell activation by recruiting phosphatases to its immunoreceptor tyrosine-based inhibitor motifs (ITIM). This chain is Leukocyte immunoglobulin-like receptor subfamily B member 3A, found in Rattus norvegicus (Rat).